The primary structure comprises 421 residues: Serine hydroxymethyltransferase (421 aa).

(6S)-5,6,7,8-tetrahydrofolate-binding positions include Leu120 and 124–126 (GHL). Lys229 carries the N6-(pyridoxal phosphate)lysine modification. 354-356 (SPF) provides a ligand contact to (6S)-5,6,7,8-tetrahydrofolate.

This sequence belongs to the SHMT family. Homodimer. It depends on pyridoxal 5'-phosphate as a cofactor.

Its subcellular location is the cytoplasm. The enzyme catalyses (6R)-5,10-methylene-5,6,7,8-tetrahydrofolate + glycine + H2O = (6S)-5,6,7,8-tetrahydrofolate + L-serine. It functions in the pathway one-carbon metabolism; tetrahydrofolate interconversion. Its pathway is amino-acid biosynthesis; glycine biosynthesis; glycine from L-serine: step 1/1. Catalyzes the reversible interconversion of serine and glycine with tetrahydrofolate (THF) serving as the one-carbon carrier. This reaction serves as the major source of one-carbon groups required for the biosynthesis of purines, thymidylate, methionine, and other important biomolecules. Also exhibits THF-independent aldolase activity toward beta-hydroxyamino acids, producing glycine and aldehydes, via a retro-aldol mechanism. This chain is Serine hydroxymethyltransferase, found in Opitutus terrae (strain DSM 11246 / JCM 15787 / PB90-1).